The primary structure comprises 329 residues: uncharacterized protein (329 aa).

The SIS domain occupies 38-184 (IVKLILKSQE…MACLMRAKNF (147 aa)). 56–61 (GVGKSA) serves as a coordination point for ATP. 2 consecutive CBS domains span residues 211 to 267 (QTTN…GVSL) and 270 to 329 (EVRH…GLKA).

Belongs to the SIS family. GutQ/KpsF subfamily.

This is an uncharacterized protein from Helicobacter pylori (strain ATCC 700392 / 26695) (Campylobacter pylori).